The primary structure comprises 612 residues: Cryptochrome-2 (612 aa).

Residues 1–485 (MKMDKKTIVW…TARELLAKAI (485 aa)) are CNT2, binds chromophores to sense blue light and mediate CRY dimerization. A Photolyase/cryptochrome alpha/beta domain is found at 5 to 134 (KKTIVWFRRD…SVQSYNGDLL (130 aa)). Tyr232 provides a ligand contact to FAD. Asn235 and Ser243 together coordinate Mg(2+). Residue 244–248 (TSLLS) coordinates FAD. Mg(2+) is bound at residue His355. FAD contacts are provided by residues Asn356 and 387 to 389 (DAD). Position 356–357 (356–357 (NR)) interacts with ATP. Asp406 serves as a coordination point for ATP. A CCT2/CCE2, mediates blue light signaling region spans residues 486–612 (SRTREAQIMI…TTSLGKNGCK (127 aa)). The tract at residues 539-576 (GSKRVKPEEEEERDMKKSRGFDERELFSTAESSSSSSV) is disordered. A Nuclear localization signal motif is present at residues 541–555 (KRVKPEEEEERDMKK). Basic and acidic residues predominate over residues 551–564 (RDMKKSRGFDEREL). Residue Ser587 is modified to Phosphoserine; by CK1. The disordered stretch occupies residues 590–612 (KNLEGIQDSSDQITTSLGKNGCK). Over residues 596–612 (QDSSDQITTSLGKNGCK) the composition is skewed to polar residues. Phosphoserine occurs at positions 598 and 599. Thr603 is modified (phosphothreonine; by CK1). Position 605 is a phosphoserine (Ser605).

This sequence belongs to the DNA photolyase class-1 family. Homodimer. Blue-light dependent dimerization. Interacts with COP1 and PHYB in the nucleus. Binds reversibly to CIBs proteins such as BHLH63/CIB1, BHLH78/CIB2, BHLH74/CIB4 and BHLH76/CIB5 after blue light illumination to stimulate their transcription factor activities. Interacts with PIF4 and PIF5 in the nucleus in response to low blue light (LBL). Binds to SPA1 in response to blue light, this interaction prevents SPA1/COP1 complex formation but stimulates interaction with COP1, and thus avoid COP1-dependent degradation of the transcription factors CO and HY5 by the proteasome and promotes hypocotyl elongation and floral initiation. Binding to ATP mediates conformational changes which facilitate flavin binding. Interacts with BIC1 in both darkness and light. Interacts with NRP. The cofactor is FAD. Requires (6R)-5,10-methylene-5,6,7,8-tetrahydrofolate as cofactor. Post-translationally, phosphorylated by CK1.3 and CK1.4; in response to blue light. Required for degradation. Adopts an open conformation when phosphorylated upon photoexcitation and thus interacts with signaling partner proteins. Not autophosphorylated, even in complex with FAD cofactor. Ubiquitinated; in response to blue light. Mostly expressed in the shoot meristems and root tips, and, to a lower extent, in the cotyledons, hypocotyls, and roots.

It is found in the nucleus. The protein localises to the PML body. It localises to the cytoplasm. In terms of biological role, photoreceptor that mediates primarily blue light inhibition of hypocotyl elongation and photoperiodic control of floral initiation, and regulates other light responses, including circadian rhythms, tropic growth, stomata opening, guard cell development, root development, bacterial and viral pathogen responses, abiotic stress responses, cell cycles, programmed cell death, apical dominance, fruit and ovule development, seed dormancy, and magnetoreception. Photoexcited cryptochromes interact with signaling partner proteins to alter gene expression at both transcriptional and post-translational levels and, consequently, regulate the corresponding metabolic and developmental programs. Blue-light absorbing flavoprotein that activates reversible flavin photoreduction via an electron transport chain comprising a tryptophan triad (W-321, W-374 and W-397), or via an alternative electron transport that involves small metabolites, including NADPH, NADH, and ATP. The half-life of the activated signaling state is about 16 minutes. Perceives low blue light (LBL) and responds by directly contacting two bHLH transcription factors, PIF4 and PIF5, at chromatin on E-box variant 5'-CA[CT]GTG-3' to promote their activity and stimulate specific gene expression to adapt global physiology (e.g. hypocotyl elongation and hyponastic growth in low blue light). In response to blue light, binds to CIB proteins (e.g. BHLH63/CIB1 and BHLH76/CIB5) to activate transcription and floral initiation. Mediates blue light-induced gene expression, floral initiation and hypocotyl elongation through the interaction with SPA1 that prevents formation of SPA1/COP1 complex but stimulates COP1 binding, and thus inhibits COP1-mediated degradation of transcription factors (e.g. CO and HY5). Promotes flowering time in continuous light (LL). Involved in shortening the circadian clock period, especially at 27 degrees Celsius, in blue light (BL). Required to maintain clock genes expression rhythm. Triggers nuclear accumulation of ROS in response to blue light illumination. Involved in blue light-dependent stomatal opening, transpiration and inhibition of stem and root growth, probably by regulating abscisic acid (ABA). Regulates the timing of flowering by promoting the expression of 'FLOWERING LOCUS T' (FT) in vascular bundles. Negatively regulated by 'FLOWERING LOCUS C' (FLC). General positive regulator of reversible low light-induced chromatin decompaction. Involved in triggering chromatin decondensation during floral transition. Together with phototropins, involved in phototropism regulation by various blue light fluence; blue light attenuates phototropism in high fluence rates (100 umol.m-2.s-1) but enhances phototropism in low fluence rates (&lt;1.0 umol.m-2.s-1). The effect of near-null magnetic field on flowering is altered by changes of blue light cycle and intensity in a CRY1/CRY2-dependent manner. Involved in the strigolactone signaling that regulates hypocotyl growth in response to blue light. Functionally, confers resistance to turnip crinkle virus (TCV) by preventing COP1-mediated proteasome-mediated degradation of RPP8/HRT, thus promoting its stability in light. Exposure to darkness or blue-light induces degradation of CRY2, and in turn of RPP8/HRT, resulting in susceptibility to TCV. The sequence is that of Cryptochrome-2 from Arabidopsis thaliana (Mouse-ear cress).